A 207-amino-acid chain; its full sequence is Dephospho-CoA kinase (207 aa).

A DPCK domain is found at 12–207 (LIGITGMIGG…LYSTLLGKML (196 aa)). An ATP-binding site is contributed by 20–25 (GGGKST).

It belongs to the CoaE family.

The protein localises to the cytoplasm. It catalyses the reaction 3'-dephospho-CoA + ATP = ADP + CoA + H(+). The protein operates within cofactor biosynthesis; coenzyme A biosynthesis; CoA from (R)-pantothenate: step 5/5. Catalyzes the phosphorylation of the 3'-hydroxyl group of dephosphocoenzyme A to form coenzyme A. This Leptospira interrogans serogroup Icterohaemorrhagiae serovar Lai (strain 56601) protein is Dephospho-CoA kinase.